A 166-amino-acid chain; its full sequence is Endoribonuclease YbeY (166 aa).

H129, H133, and H139 together coordinate Zn(2+).

Belongs to the endoribonuclease YbeY family. Zn(2+) serves as cofactor.

It localises to the cytoplasm. In terms of biological role, single strand-specific metallo-endoribonuclease involved in late-stage 70S ribosome quality control and in maturation of the 3' terminus of the 16S rRNA. The polypeptide is Endoribonuclease YbeY (Mesorhizobium japonicum (strain LMG 29417 / CECT 9101 / MAFF 303099) (Mesorhizobium loti (strain MAFF 303099))).